We begin with the raw amino-acid sequence, 307 residues long: Mitochondrial glycine transporter (307 aa).

Solcar repeat units lie at residues 8–87 (PRNS…MRSS), 115–199 (LTMY…SKQL), and 221–305 (TSTT…LVKR). Helical transmembrane passes span 14 to 39 (LIGGFFGGLTSAVALQPLDLLKTRIQ), 62 to 88 (GTLPSALRTSIGSALYLSCLNLMRSSL), 121 to 146 (LLTGAFARGLVGYITMPITVIKVRYE), 174 to 197 (GFGATCLRDAPYAGLYVLLYEKSK), 225 to 251 (VNTTSAVLSASLATTVTAPFDTIKTRM), and 280 to 298 (GLSMRLARKAFSAGIAWGI).

It belongs to the mitochondrial carrier (TC 2.A.29) family. SLC25A38 subfamily.

It localises to the mitochondrion. Its subcellular location is the mitochondrion inner membrane. It carries out the reaction glycine(in) = glycine(out). Its function is as follows. Mitochondrial glycine transporter that imports glycine into the mitochondrial matrix. Plays an important role in providing glycine for the first enzymatic step in heme biosynthesis, the condensation of glycine with succinyl-CoA to produce 5-aminolevulinate (ALA) in the mitochondrial matrix. This is Mitochondrial glycine transporter from Saccharomyces cerevisiae (strain ATCC 204508 / S288c) (Baker's yeast).